Reading from the N-terminus, the 195-residue chain is uncharacterized protein (195 aa).

An HTH tetR-type domain is found at 6–66 (VESRKRLLKA…ELITDFHSRV (61 aa)). A DNA-binding region (H-T-H motif) is located at residues 29 to 48 (KVSEIVKKAGFTQPSFYLYF).

This is an uncharacterized protein from Bacillus subtilis (strain 168).